A 308-amino-acid chain; its full sequence is ATP synthase gamma chain (308 aa).

The protein belongs to the ATPase gamma chain family. In terms of assembly, F-type ATPases have 2 components, CF(1) - the catalytic core - and CF(0) - the membrane proton channel. CF(1) has five subunits: alpha(3), beta(3), gamma(1), delta(1), epsilon(1). CF(0) has three main subunits: a, b and c.

The protein resides in the cell membrane. Produces ATP from ADP in the presence of a proton gradient across the membrane. The gamma chain is believed to be important in regulating ATPase activity and the flow of protons through the CF(0) complex. The polypeptide is ATP synthase gamma chain (Saccharopolyspora erythraea (strain ATCC 11635 / DSM 40517 / JCM 4748 / NBRC 13426 / NCIMB 8594 / NRRL 2338)).